A 404-amino-acid chain; its full sequence is Cysteine desulfurase IscS (404 aa).

Pyridoxal 5'-phosphate-binding positions include 75-76 (AT), Asn-155, Gln-183, and 203-205 (SSH). The residue at position 206 (Lys-206) is an N6-(pyridoxal phosphate)lysine. Pyridoxal 5'-phosphate is bound at residue Thr-243. The active-site Cysteine persulfide intermediate is the Cys-328. [2Fe-2S] cluster is bound at residue Cys-328.

The protein belongs to the class-V pyridoxal-phosphate-dependent aminotransferase family. NifS/IscS subfamily. In terms of assembly, homodimer. Forms a heterotetramer with IscU, interacts with other sulfur acceptors. The cofactor is pyridoxal 5'-phosphate.

The protein resides in the cytoplasm. The catalysed reaction is (sulfur carrier)-H + L-cysteine = (sulfur carrier)-SH + L-alanine. It participates in cofactor biosynthesis; iron-sulfur cluster biosynthesis. Its function is as follows. Master enzyme that delivers sulfur to a number of partners involved in Fe-S cluster assembly, tRNA modification or cofactor biosynthesis. Catalyzes the removal of elemental sulfur atoms from cysteine to produce alanine. Functions as a sulfur delivery protein for Fe-S cluster synthesis onto IscU, an Fe-S scaffold assembly protein, as well as other S acceptor proteins. The protein is Cysteine desulfurase IscS of Histophilus somni (strain 2336) (Haemophilus somnus).